We begin with the raw amino-acid sequence, 388 residues long: Dual-specificity RNA methyltransferase RlmN (388 aa).

Catalysis depends on E109, which acts as the Proton acceptor. Positions 115–354 (EDDRATLCVS…TIVRKTRGDD (240 aa)) constitute a Radical SAM core domain. C122 and C359 are disulfide-bonded. The [4Fe-4S] cluster site is built by C129, C133, and C136. S-adenosyl-L-methionine-binding positions include 183–184 (GE), S215, 237–239 (SLH), and N316. The active-site S-methylcysteine intermediate is C359.

The protein belongs to the radical SAM superfamily. RlmN family. Requires [4Fe-4S] cluster as cofactor.

It is found in the cytoplasm. It catalyses the reaction adenosine(2503) in 23S rRNA + 2 reduced [2Fe-2S]-[ferredoxin] + 2 S-adenosyl-L-methionine = 2-methyladenosine(2503) in 23S rRNA + 5'-deoxyadenosine + L-methionine + 2 oxidized [2Fe-2S]-[ferredoxin] + S-adenosyl-L-homocysteine. The catalysed reaction is adenosine(37) in tRNA + 2 reduced [2Fe-2S]-[ferredoxin] + 2 S-adenosyl-L-methionine = 2-methyladenosine(37) in tRNA + 5'-deoxyadenosine + L-methionine + 2 oxidized [2Fe-2S]-[ferredoxin] + S-adenosyl-L-homocysteine. Functionally, specifically methylates position 2 of adenine 2503 in 23S rRNA and position 2 of adenine 37 in tRNAs. m2A2503 modification seems to play a crucial role in the proofreading step occurring at the peptidyl transferase center and thus would serve to optimize ribosomal fidelity. The chain is Dual-specificity RNA methyltransferase RlmN from Citrobacter koseri (strain ATCC BAA-895 / CDC 4225-83 / SGSC4696).